Consider the following 294-residue polypeptide: Beta-lactamase (294 aa).

Residues 1–27 (MFKKRGRQTVLIAAVLAFFTASSPLLA) form the signal peptide. S76 acts as the Acyl-ester intermediate in catalysis. E174 acts as the Proton acceptor in catalysis. 240-242 (KTG) contacts substrate.

This sequence belongs to the class-A beta-lactamase family.

The enzyme catalyses a beta-lactam + H2O = a substituted beta-amino acid. This chain is Beta-lactamase, found in Citrobacter koseri (Citrobacter diversus).